The sequence spans 570 residues: Methionine--tRNA ligase (570 aa).

The 'HIGH' region signature appears at 11-21 (PYVQTVPHLGN). Zn(2+) contacts are provided by C143, C146, C156, and C159. The 'KMSKS' region signature appears at 333–337 (KFSKS). K336 contacts ATP.

The protein belongs to the class-I aminoacyl-tRNA synthetase family. MetG type 1 subfamily. Zn(2+) serves as cofactor.

It localises to the cytoplasm. It catalyses the reaction tRNA(Met) + L-methionine + ATP = L-methionyl-tRNA(Met) + AMP + diphosphate. Is required not only for elongation of protein synthesis but also for the initiation of all mRNA translation through initiator tRNA(fMet) aminoacylation. The polypeptide is Methionine--tRNA ligase (Pyrobaculum aerophilum (strain ATCC 51768 / DSM 7523 / JCM 9630 / CIP 104966 / NBRC 100827 / IM2)).